The chain runs to 314 residues: Methionyl-tRNA formyltransferase (314 aa).

Residue 113 to 116 (SLLP) coordinates (6S)-5,6,7,8-tetrahydrofolate.

The protein belongs to the Fmt family.

The catalysed reaction is L-methionyl-tRNA(fMet) + (6R)-10-formyltetrahydrofolate = N-formyl-L-methionyl-tRNA(fMet) + (6S)-5,6,7,8-tetrahydrofolate + H(+). Functionally, attaches a formyl group to the free amino group of methionyl-tRNA(fMet). The formyl group appears to play a dual role in the initiator identity of N-formylmethionyl-tRNA by promoting its recognition by IF2 and preventing the misappropriation of this tRNA by the elongation apparatus. This is Methionyl-tRNA formyltransferase from Pseudomonas aeruginosa (strain UCBPP-PA14).